Reading from the N-terminus, the 428-residue chain is Glucose-1-phosphate adenylyltransferase (428 aa).

Alpha-D-glucose 1-phosphate-binding positions include Tyr-114, Gly-179, 194 to 195 (EK), and Ser-212.

The protein belongs to the bacterial/plant glucose-1-phosphate adenylyltransferase family. In terms of assembly, homotetramer.

It catalyses the reaction alpha-D-glucose 1-phosphate + ATP + H(+) = ADP-alpha-D-glucose + diphosphate. It functions in the pathway glycan biosynthesis; glycogen biosynthesis. Its function is as follows. Involved in the biosynthesis of ADP-glucose, a building block required for the elongation reactions to produce glycogen. Catalyzes the reaction between ATP and alpha-D-glucose 1-phosphate (G1P) to produce pyrophosphate and ADP-Glc. In Yersinia pseudotuberculosis serotype O:1b (strain IP 31758), this protein is Glucose-1-phosphate adenylyltransferase.